A 152-amino-acid polypeptide reads, in one-letter code: uncharacterized protein (152 aa).

N2 carries an N-linked (GlcNAc...) asparagine; by host glycan. 3 consecutive transmembrane segments (helical) span residues 5 to 25 (MILL…MNLW), 36 to 56 (LNDF…CYIL), and 68 to 88 (LIIT…QAFI). N113 carries N-linked (GlcNAc...) asparagine; by host glycosylation.

The protein resides in the membrane. This is an uncharacterized protein from Acanthamoeba polyphaga mimivirus (APMV).